A 304-amino-acid chain; its full sequence is Acetyl-coenzyme A carboxylase carboxyl transferase subunit beta (304 aa).

Residues 23–292 form the CoA carboxyltransferase N-terminal domain; that stretch reads VWTKCDSCGQ…PNPDAPREGV (270 aa). C27, C30, C46, and C49 together coordinate Zn(2+). The segment at 27–49 adopts a C4-type zinc-finger fold; it reads CDSCGQVLYRAELERNLEVCPKC. The segment at 284–304 is disordered; it reads NPDAPREGVVVPPAPDQESEV.

This sequence belongs to the AccD/PCCB family. Acetyl-CoA carboxylase is a heterohexamer composed of biotin carboxyl carrier protein (AccB), biotin carboxylase (AccC) and two subunits each of ACCase subunit alpha (AccA) and ACCase subunit beta (AccD). The cofactor is Zn(2+).

The protein localises to the cytoplasm. It catalyses the reaction N(6)-carboxybiotinyl-L-lysyl-[protein] + acetyl-CoA = N(6)-biotinyl-L-lysyl-[protein] + malonyl-CoA. Its pathway is lipid metabolism; malonyl-CoA biosynthesis; malonyl-CoA from acetyl-CoA: step 1/1. Component of the acetyl coenzyme A carboxylase (ACC) complex. Biotin carboxylase (BC) catalyzes the carboxylation of biotin on its carrier protein (BCCP) and then the CO(2) group is transferred by the transcarboxylase to acetyl-CoA to form malonyl-CoA. This is Acetyl-coenzyme A carboxylase carboxyl transferase subunit beta from Salmonella paratyphi A (strain ATCC 9150 / SARB42).